A 161-amino-acid chain; its full sequence is Large ribosomal subunit protein uL11 (161 aa).

This sequence belongs to the universal ribosomal protein uL11 family. In terms of assembly, part of the ribosomal stalk of the 50S ribosomal subunit. Interacts with L10 and the large rRNA to form the base of the stalk. L10 forms an elongated spine to which L12 dimers bind in a sequential fashion forming a multimeric L10(L12)X complex.

In terms of biological role, forms part of the ribosomal stalk which helps the ribosome interact with GTP-bound translation factors. This chain is Large ribosomal subunit protein uL11, found in Methanosarcina mazei (strain ATCC BAA-159 / DSM 3647 / Goe1 / Go1 / JCM 11833 / OCM 88) (Methanosarcina frisia).